The chain runs to 279 residues: Small ribosomal subunit protein uS2 (279 aa).

The protein belongs to the universal ribosomal protein uS2 family. In terms of assembly, component of the small ribosomal subunit. Mature ribosomes consist of a small (40S) and a large (60S) subunit. The 40S subunit contains about 33 different proteins and 1 molecule of RNA (18S). The 60S subunit contains about 49 different proteins and 3 molecules of RNA (28S, 5.8S and 5S). Interacts with ribosomal protein S21.

The protein localises to the cytoplasm. Its function is as follows. Required for the assembly and/or stability of the 40S ribosomal subunit. Required for the processing of the 20S rRNA-precursor to mature 18S rRNA in a late step of the maturation of 40S ribosomal subunits. This chain is Small ribosomal subunit protein uS2, found in Schistosoma japonicum (Blood fluke).